A 338-amino-acid chain; its full sequence is MKPSGAFLSLCVVLLSLATHCFSFPSDSLRRDAHSDTNALKSRDRRQAPAPQLSCGGVLYNPAAEMCCHGNVEPRVGASPMCCESSSYDPSTQMCCEGTVSNKPPGIAMCCGSEAYDANSQICCNGNINTKATGPTAQPGCCGEFSYDAASQLCCDSHPVLMVGSLPSCCGRNGYDANTSLCCGDNNVAFVSGPQAACCGDMGYNRNTHLCCDSNVLPMPAMGACCGSWTYSQQTHLCCEGVQLYKGMNTGCCGAVGYNQVNSLCCEGTVVPKSPSKPVCCGTTSYNPLTELCCDGIAFFKTGFIRPTCCGGAIYDATVARCCDGVPTYNVASCAGLA.

An N-terminal signal peptide occupies residues 1-23; the sequence is MKPSGAFLSLCVVLLSLATHCFS. Residues 30-47 show a composition bias toward basic and acidic residues; it reads RRDAHSDTNALKSRDRRQ. The segment at 30–50 is disordered; that stretch reads RRDAHSDTNALKSRDRRQAPA.

In terms of tissue distribution, component of the acid-insoluble organic matrix of the aragonitic skeleton (at protein level). Initially, expressed in an aboral submarginal ring and then along calcifying septa.

It localises to the secreted. This Acropora millepora (Staghorn coral) protein is Galaxin.